The chain runs to 870 residues: Adhesin AWP1 (870 aa).

A signal peptide spans 1 to 18; it reads MSLITIFAFFIKATLVLS. An N-linked (GlcNAc...) asparagine glycan is attached at Asn224. Cys284 and Cys322 form a disulfide bridge. The segment at 329-835 is disordered; the sequence is ITPSSSVEPS…TRQTSVIAPG (507 aa). Positions 331–566 are enriched in low complexity; sequence PSSSVEPSSS…SSSAVVPTSS (236 aa). Over residues 567–576 the composition is skewed to gly residues; the sequence is AGGGNGGDNG. Low complexity predominate over residues 577 to 641; sequence QPGADGQPGA…PGAAGQPGAA (65 aa). Residues 642 to 652 show a composition bias toward gly residues; the sequence is GQPGAGSGGGS. Asn669 carries an N-linked (GlcNAc...) asparagine glycan. Residues 675 to 721 show a composition bias toward gly residues; it reads SGTGNGQAGSGQAGSGQVGSGQAGAGQAGSGQAGAGQAGSGQAGAGQ. 2 stretches are compositionally biased toward polar residues: residues 724–735 and 792–801; these read LDNTASGQSEGG and GSGTDQSSGR.

Its subcellular location is the secreted. The protein resides in the cell wall. Functionally, may play a role in cell adhesion. This Candida glabrata (strain ATCC 2001 / BCRC 20586 / JCM 3761 / NBRC 0622 / NRRL Y-65 / CBS 138) (Yeast) protein is Adhesin AWP1.